The following is a 332-amino-acid chain: 2,3-diketo-L-gulonate reductase (332 aa).

Residue H44 is the Proton donor of the active site. NAD(+) contacts are provided by residues 168-174 (ITMVDMS), 224-225 (WK), and 304-306 (GHE).

This sequence belongs to the LDH2/MDH2 oxidoreductase family. DlgD subfamily. In terms of assembly, homodimer.

The protein localises to the cytoplasm. The enzyme catalyses 3-dehydro-L-gulonate + NAD(+) = 2,3-dioxo-L-gulonate + NADH + H(+). It catalyses the reaction 3-dehydro-L-gulonate + NADP(+) = 2,3-dioxo-L-gulonate + NADPH + H(+). Catalyzes the reduction of 2,3-diketo-L-gulonate in the presence of NADH, to form 3-keto-L-gulonate. This is 2,3-diketo-L-gulonate reductase from Salmonella paratyphi A (strain ATCC 9150 / SARB42).